Here is a 1203-residue protein sequence, read N- to C-terminus: Kinesin-like protein KIN-14Q (1203 aa).

Positions 1-28 (MEDCCDPLLATDASPRPESFSRSEKDIA) are disordered. Residues 19 to 28 (SFSRSEKDIA) are compositionally biased toward basic and acidic residues. Positions 336 to 395 (ENLVCRAEEEAEGMRSDCEQQRKEMEDMKRMVEELKLENQQKTRECEEALNSLSEIQNEL) form a coiled coil. The region spanning 499–825 (NIRVFCRCRP…LNFASRVRGI (327 aa)) is the Kinesin motor domain. 582–589 (GQTGTGKT) serves as a coordination point for ATP. Residues 846-901 (VEKWKQDMKGKDEQIRKMEETMYGLEAKIKERDTKNKTLQDKVKELESQLLVERKL) are a coiled coil. Residues 907-931 (DTKIAEQQTKQQTEDENNTSKRPPL) form a disordered region.

This sequence belongs to the TRAFAC class myosin-kinesin ATPase superfamily. Kinesin family. KIN-14 subfamily.

This Arabidopsis thaliana (Mouse-ear cress) protein is Kinesin-like protein KIN-14Q.